Consider the following 568-residue polypeptide: Nitrite reductase (568 aa).

Residues 1-25 (MPFGKPLVGTLLASLTLLGLATAHA) form the signal peptide. The interval 26–54 (KDDMKAAEQYQGAASAVDPAHVVRTNGAP) is N-terminal tail. Residues 55 to 140 (DMSESEFNEA…AKYIQHTPPQ (86 aa)) enclose the Cytochrome c domain. Heme c-binding residues include C72, C75, H76, R96, T109, and M113. The segment at 141–568 (PPEWGMPEMR…NVYNTQHDVY (428 aa)) is D1-heme domain. Heme d1 is bound by residues H207, R250, S251, Y270, R397, and Q508.

As to quaternary structure, homodimer. The cofactor is heme c. It depends on heme as a cofactor.

It is found in the periplasm. It carries out the reaction nitric oxide + Fe(III)-[cytochrome c] + H2O = Fe(II)-[cytochrome c] + nitrite + 2 H(+). It catalyses the reaction A + NH4(+) + H2O = hydroxylamine + AH2 + H(+). This is Nitrite reductase (nirS) from Pseudomonas aeruginosa (strain ATCC 15692 / DSM 22644 / CIP 104116 / JCM 14847 / LMG 12228 / 1C / PRS 101 / PAO1).